The primary structure comprises 1405 residues: DNA-directed RNA polymerase subunit beta' (1405 aa).

Zn(2+)-binding residues include Cys-70, Cys-72, Cys-85, and Cys-88. Positions 460, 462, and 464 each coordinate Mg(2+). 4 residues coordinate Zn(2+): Cys-814, Cys-888, Cys-895, and Cys-898.

It belongs to the RNA polymerase beta' chain family. As to quaternary structure, the RNAP catalytic core consists of 2 alpha, 1 beta, 1 beta' and 1 omega subunit. When a sigma factor is associated with the core the holoenzyme is formed, which can initiate transcription. Mg(2+) serves as cofactor. Zn(2+) is required as a cofactor.

The enzyme catalyses RNA(n) + a ribonucleoside 5'-triphosphate = RNA(n+1) + diphosphate. Functionally, DNA-dependent RNA polymerase catalyzes the transcription of DNA into RNA using the four ribonucleoside triphosphates as substrates. The sequence is that of DNA-directed RNA polymerase subunit beta' from Shewanella baltica (strain OS223).